We begin with the raw amino-acid sequence, 233 residues long: Superoxide dismutase [Mn] 3.4, mitochondrial (233 aa).

Residues 1-29 (MALRTLASKNALSFALGGAARPSAASARG) constitute a mitochondrion transit peptide. The Mn(2+) site is built by His57, His105, Asp194, and His198.

This sequence belongs to the iron/manganese superoxide dismutase family. As to quaternary structure, homotetramer. It depends on Mn(2+) as a cofactor.

Its subcellular location is the mitochondrion matrix. It catalyses the reaction 2 superoxide + 2 H(+) = H2O2 + O2. Its function is as follows. Destroys superoxide anion radicals which are normally produced within the cells and which are toxic to biological systems. The polypeptide is Superoxide dismutase [Mn] 3.4, mitochondrial (SODA.3) (Zea mays (Maize)).